We begin with the raw amino-acid sequence, 504 residues long: MVAPGSVTSRLGSVFPFLLVLVDLQYEGAECGVNADVEKHLELGKKLLAAGQLADALSQFHAAVDGDPDNYIAYYRRATVFLAMGKSKAALPDLTKVIQLKMDFTAARLQRGHLLLKQGKLDEAEDDFKKVLKSNPSENEEKEAQSQLIKSDEMQRLRSQALNAFGSGDYTAAIAFLDKILEVCVWDAELRELRAECFIKEGEPRKAISDLKAASKLKNDNTEAFYKISTLYYQLGDHELSLSEVRECLKLDQDHKRCFAHYKQVKKLNKLIESAEELIRDGRYTDATSKYESVMKTEPSIAEYTVRSKERICHCFSKDEKPVEAIRVCSEVLQMEPDNVNALKDRAEAYLIEEMYDEAIQDYETAQEHNENDQQIREGLEKAQRLLKQSQKRDYYKILGVKRNAKKQEIIKAYRKLALQWHPDNFQNEEEKKKAEKKFIDIAAAKEVLSDPEMRKKFDDGEDPLDAESQQGGGGNPFHRSWNSWQGFNPFSSGGPFRFKFHFN.

Positions 1 to 31 (MVAPGSVTSRLGSVFPFLLVLVDLQYEGAEC) are cleaved as a signal peptide. TPR repeat units follow at residues 37-70 (VEKHLELGKKLLAAGQLADALSQFHAAVDGDPDN), 72-104 (IAYYRRATVFLAMGKSKAALPDLTKVIQLKMDF), 105-138 (TAARLQRGHLLLKQGKLDEAEDDFKKVLKSNPSE), 154-187 (MQRLRSQALNAFGSGDYTAAIAFLDKILEVCVWD), 189-221 (ELRELRAECFIKEGEPRKAISDLKAASKLKNDN), 222-255 (TEAFYKISTLYYQLGDHELSLSEVRECLKLDQDH), 268-301 (LNKLIESAEELIRDGRYTDATSKYESVMKTEPSI), 306-339 (VRSKERICHCFSKDEKPVEAIRVCSEVLQMEPDN), and 340-373 (VNALKDRAEAYLIEEMYDEAIQDYETAQEHNEND). Cys248 and Cys258 are joined by a disulfide. Ser274 carries the post-translational modification Phosphoserine; by FAM20C. An intrachain disulfide couples Cys313 to Cys329. The segment at 375-393 (QIREGLEKAQRLLKQSQKR) is flexible linker. Positions 394-462 (DYYKILGVKR…EMRKKFDDGE (69 aa)) constitute a J domain. The disordered stretch occupies residues 451-481 (DPEMRKKFDDGEDPLDAESQQGGGGNPFHRS).

Interacts with EIF2AK4/GCN2; this interaction occurs under endoplasmic reticulum (ER) stress, hypothermic and amino acid starving stress conditions and inhibits EIF2AK4/GCN2 kinase activity. Interacts with EIF2AK3. Interacts with EIF2AK2. Forms a trimeric complex with DNAJB1 and HSPA8. Interacts with THAP12. As to expression, widely expressed with high level in the pancreas and testis. Also expressed in cell lines with different levels.

The protein resides in the endoplasmic reticulum. Involved in the unfolded protein response (UPR) during endoplasmic reticulum (ER) stress. Acts as a negative regulator of the EIF2AK4/GCN2 kinase activity by preventing the phosphorylation of eIF-2-alpha at 'Ser-52' and hence attenuating general protein synthesis under ER stress, hypothermic and amino acid starving stress conditions. Co-chaperone of HSPA8/HSC70, it stimulates its ATPase activity. May inhibit both the autophosphorylation of EIF2AK2/PKR and the ability of EIF2AK2 to catalyze phosphorylation of the EIF2A. May inhibit EIF2AK3/PERK activity. This Homo sapiens (Human) protein is DnaJ homolog subfamily C member 3 (DNAJC3).